The sequence spans 246 residues: Adenylate kinase 4 (246 aa).

Position 2 is an N-acetylalanine (Ala2). An ATP-binding site is contributed by 43 to 48; sequence GSGKGT. The tract at residues 63–92 is NMP; it reads STGDMLRAAVASKTPLGVKAKEAMEKGELV. AMP contacts are provided by residues Thr64, Arg69, 90-92, 118-121, and Gln125; these read ELV and GFPR. The segment at 159-196 is LID; it reads GRWIHPSSGRSYHTKFAPPKTPGVDDITGEPLIQRKDD. Residue Arg160 coordinates ATP. 2 residues coordinate AMP: Arg193 and Arg204.

Belongs to the adenylate kinase family. As to quaternary structure, monomer.

Its subcellular location is the cytoplasm. It carries out the reaction AMP + ATP = 2 ADP. Functionally, catalyzes the reversible transfer of the terminal phosphate group between ATP and AMP. Plays an important role in cellular energy homeostasis and in adenine nucleotide metabolism. The protein is Adenylate kinase 4 (ADK1) of Arabidopsis thaliana (Mouse-ear cress).